We begin with the raw amino-acid sequence, 631 residues long: Phosphomethylpyrimidine synthase (631 aa).

Residues N239, M268, Y297, H333, 353 to 355 (SRG), 394 to 397 (DGLR), and E433 each bind substrate. H437 lines the Zn(2+) pocket. Y460 contacts substrate. Residue H501 participates in Zn(2+) binding. Positions 581, 584, and 589 each coordinate [4Fe-4S] cluster.

This sequence belongs to the ThiC family. Homodimer. The cofactor is [4Fe-4S] cluster.

It carries out the reaction 5-amino-1-(5-phospho-beta-D-ribosyl)imidazole + S-adenosyl-L-methionine = 4-amino-2-methyl-5-(phosphooxymethyl)pyrimidine + CO + 5'-deoxyadenosine + formate + L-methionine + 3 H(+). It functions in the pathway cofactor biosynthesis; thiamine diphosphate biosynthesis. Its function is as follows. Catalyzes the synthesis of the hydroxymethylpyrimidine phosphate (HMP-P) moiety of thiamine from aminoimidazole ribotide (AIR) in a radical S-adenosyl-L-methionine (SAM)-dependent reaction. The protein is Phosphomethylpyrimidine synthase of Escherichia coli O139:H28 (strain E24377A / ETEC).